Consider the following 155-residue polypeptide: 2-C-methyl-D-erythritol 2,4-cyclodiphosphate synthase (155 aa).

The a divalent metal cation site is built by D8 and H10. 4-CDP-2-C-methyl-D-erythritol 2-phosphate is bound by residues 8–10 and 34–35; these read DVH and HS. Residue H42 participates in a divalent metal cation binding. Residues 56–58, 61–65, 100–106, 132–135, F139, and K142 each bind 4-CDP-2-C-methyl-D-erythritol 2-phosphate; these read DIG, FPDSD, AQKPKML, and TTEE.

This sequence belongs to the IspF family. Homotrimer. A divalent metal cation is required as a cofactor.

It carries out the reaction 4-CDP-2-C-methyl-D-erythritol 2-phosphate = 2-C-methyl-D-erythritol 2,4-cyclic diphosphate + CMP. Its pathway is isoprenoid biosynthesis; isopentenyl diphosphate biosynthesis via DXP pathway; isopentenyl diphosphate from 1-deoxy-D-xylulose 5-phosphate: step 4/6. In terms of biological role, involved in the biosynthesis of isopentenyl diphosphate (IPP) and dimethylallyl diphosphate (DMAPP), two major building blocks of isoprenoid compounds. Catalyzes the conversion of 4-diphosphocytidyl-2-C-methyl-D-erythritol 2-phosphate (CDP-ME2P) to 2-C-methyl-D-erythritol 2,4-cyclodiphosphate (ME-CPP) with a corresponding release of cytidine 5-monophosphate (CMP). The polypeptide is 2-C-methyl-D-erythritol 2,4-cyclodiphosphate synthase (Clostridium botulinum (strain Okra / Type B1)).